The primary structure comprises 291 residues: 4-hydroxybenzoate octaprenyltransferase (291 aa).

8 helical membrane-spanning segments follow: residues 23–43, 47–67, 98–118, 139–159, 171–191, 216–236, 238–258, and 267–287; these read PIGT…AADG, PALV…GCAI, LAVA…LNAL, FFAI…PMAY, WLML…YAMV, IMLC…ALAL, AAYW…YTLL, and FFVF…AALA.

The protein belongs to the UbiA prenyltransferase family. It depends on Mg(2+) as a cofactor.

The protein resides in the cell inner membrane. It catalyses the reaction all-trans-octaprenyl diphosphate + 4-hydroxybenzoate = 4-hydroxy-3-(all-trans-octaprenyl)benzoate + diphosphate. The protein operates within cofactor biosynthesis; ubiquinone biosynthesis. In terms of biological role, catalyzes the prenylation of para-hydroxybenzoate (PHB) with an all-trans polyprenyl group. Mediates the second step in the final reaction sequence of ubiquinone-8 (UQ-8) biosynthesis, which is the condensation of the polyisoprenoid side chain with PHB, generating the first membrane-bound Q intermediate 3-octaprenyl-4-hydroxybenzoate. This Ralstonia nicotianae (strain ATCC BAA-1114 / GMI1000) (Ralstonia solanacearum) protein is 4-hydroxybenzoate octaprenyltransferase.